A 94-amino-acid chain; its full sequence is uncharacterized protein (94 aa).

Residues 1 to 23 (MVLLAGTRPQGGEARCMIPPPPS) are disordered.

This is an uncharacterized protein from Homo sapiens (Human).